Consider the following 188-residue polypeptide: Holliday junction branch migration complex subunit RuvA (188 aa).

The segment at 1 to 64 is domain I; sequence MIAGISGRVL…QDGITLYGFS (64 aa). The segment at 65-143 is domain II; sequence NERKKELFLS…SAGIKDMRIY (79 aa). Position 143 (Tyr143) is a region of interest, flexible linker. Residues 143–188 form a domain III region; the sequence is YHESLEALISLGYPEKQAREAVKHVYREGMKTSELIKEALKFLSQR.

It belongs to the RuvA family. In terms of assembly, homotetramer. Forms an RuvA(8)-RuvB(12)-Holliday junction (HJ) complex. HJ DNA is sandwiched between 2 RuvA tetramers; dsDNA enters through RuvA and exits via RuvB. An RuvB hexamer assembles on each DNA strand where it exits the tetramer. Each RuvB hexamer is contacted by two RuvA subunits (via domain III) on 2 adjacent RuvB subunits; this complex drives branch migration. In the full resolvosome a probable DNA-RuvA(4)-RuvB(12)-RuvC(2) complex forms which resolves the HJ.

Its subcellular location is the cytoplasm. The RuvA-RuvB-RuvC complex processes Holliday junction (HJ) DNA during genetic recombination and DNA repair, while the RuvA-RuvB complex plays an important role in the rescue of blocked DNA replication forks via replication fork reversal (RFR). RuvA specifically binds to HJ cruciform DNA, conferring on it an open structure. The RuvB hexamer acts as an ATP-dependent pump, pulling dsDNA into and through the RuvAB complex. HJ branch migration allows RuvC to scan DNA until it finds its consensus sequence, where it cleaves and resolves the cruciform DNA. The chain is Holliday junction branch migration complex subunit RuvA from Thermotoga petrophila (strain ATCC BAA-488 / DSM 13995 / JCM 10881 / RKU-1).